A 177-amino-acid chain; its full sequence is Adenine phosphoribosyltransferase (177 aa).

The protein belongs to the purine/pyrimidine phosphoribosyltransferase family. As to quaternary structure, homodimer.

It is found in the cytoplasm. The enzyme catalyses AMP + diphosphate = 5-phospho-alpha-D-ribose 1-diphosphate + adenine. Its pathway is purine metabolism; AMP biosynthesis via salvage pathway; AMP from adenine: step 1/1. Its function is as follows. Catalyzes a salvage reaction resulting in the formation of AMP, that is energically less costly than de novo synthesis. The sequence is that of Adenine phosphoribosyltransferase from Chlorobium phaeobacteroides (strain BS1).